The following is a 600-amino-acid chain: Glutamine--fructose-6-phosphate aminotransferase [isomerizing] (600 aa).

Catalysis depends on cysteine 2, which acts as the Nucleophile; for GATase activity. One can recognise a Glutamine amidotransferase type-2 domain in the interval 2 to 217 (CGIVGYIGQL…DKEMVIVTDD (216 aa)). 2 consecutive SIS domains span residues 283–422 (IAAA…KNGI) and 452–590 (IARE…VDKP). The active-site For Fru-6P isomerization activity is lysine 595.

As to quaternary structure, homodimer.

Its subcellular location is the cytoplasm. The catalysed reaction is D-fructose 6-phosphate + L-glutamine = D-glucosamine 6-phosphate + L-glutamate. In terms of biological role, catalyzes the first step in hexosamine metabolism, converting fructose-6P into glucosamine-6P using glutamine as a nitrogen source. The sequence is that of Glutamine--fructose-6-phosphate aminotransferase [isomerizing] (glmS) from Bacillus spizizenii (strain ATCC 23059 / NRRL B-14472 / W23) (Bacillus subtilis subsp. spizizenii).